The chain runs to 432 residues: FMRFamide peptide receptor frpr-18 (432 aa).

Topologically, residues 1–8 are extracellular; sequence MESQQLMA. Residues 9-29 traverse the membrane as a helical segment; the sequence is CAILVIVLVGIFGNSLSFILF. Residues 30–42 lie on the Cytoplasmic side of the membrane; it reads SRPHMRSSSVNVL. A helical membrane pass occupies residues 43 to 63; it reads LCALSFFDFSLLTLSIPIFVI. Residues 64–84 are Extracellular-facing; it reads PNLDLWANDLSLSTYMAYILK. Residues 85-105 traverse the membrane as a helical segment; that stretch reads LIYPINLMMQTCSVYIMVMIT. Residues 106–128 are Cytoplasmic-facing; that stretch reads LERWVAVCRPLQVRVWCTPRKSR. Residues 129-149 form a helical membrane-spanning segment; it reads NAILVIIVSAFLYNFVRFFEY. Over 150 to 176 the chain is Extracellular; that stretch reads RFVVTESGALYEKWLRDPGKHRWYYVG. Residues 177–197 form a helical membrane-spanning segment; that stretch reads YYTILYIVTHFLVPFSVMAFA. The Cytoplasmic portion of the chain corresponds to 198–225; sequence NGHVIVAMCKLSKTRQMLTRQQQREQST. The chain crosses the membrane as a helical span at residues 226-246; the sequence is TVMLLIVTFVFAICNTLPFLL. The Extracellular segment spans residues 247–271; it reads NVSESIFPTLFQDESTRGLAYWLND. A helical transmembrane segment spans residues 272 to 292; it reads LSNLLVVLNSGTTFIIYFTFS. The Cytoplasmic portion of the chain corresponds to 293–432; sequence EKYRQTLVFI…GEPDSPCQPC (140 aa). Disordered regions lie at residues 328–349 and 388–411; these read ISSE…SSRS and KLPS…GMPE.

Belongs to the G-protein coupled receptor 1 family. As to expression, expressed in a subset of neurons in the head, midbody, and tail, including AIY, ASI, BAG, URA, CAN, I6, PVQ, DVA, RIM, and VC, and in the anal sphincter and intestinal muscles. Expression from the ASI neurons is involved in promoting arousal.

The protein resides in the cell membrane. In terms of biological role, G-protein coupled receptor for flp-2 neuropeptides. May act through the G(q) alpha type of G proteins. Involved in mediating arousal from the sleep-like state called lethargus, which occurs during molting between larval and adult stages, in part by regulating touch sensitivity, and working in concert with neuropeptide pdf-1. The polypeptide is FMRFamide peptide receptor frpr-18 (Caenorhabditis elegans).